A 318-amino-acid polypeptide reads, in one-letter code: Bis(5'-nucleosyl)-tetraphosphatase, symmetrical (318 aa).

Positions 269–318 (PGREVTGPAPVARAPRRPRERQGRQRSRGNRGNAGNAAAGPKPSVDTPQD) are disordered. Residues 282–297 (APRRPRERQGRQRSRG) are compositionally biased toward basic residues. Residues 298–311 (NRGNAGNAAAGPKP) show a composition bias toward low complexity.

Belongs to the Ap4A hydrolase family.

It catalyses the reaction P(1),P(4)-bis(5'-adenosyl) tetraphosphate + H2O = 2 ADP + 2 H(+). Hydrolyzes diadenosine 5',5'''-P1,P4-tetraphosphate to yield ADP. This Xanthomonas euvesicatoria pv. vesicatoria (strain 85-10) (Xanthomonas campestris pv. vesicatoria) protein is Bis(5'-nucleosyl)-tetraphosphatase, symmetrical.